The following is a 179-amino-acid chain: Large ribosomal subunit protein uL6 (179 aa).

This sequence belongs to the universal ribosomal protein uL6 family. Part of the 50S ribosomal subunit.

This protein binds to the 23S rRNA, and is important in its secondary structure. It is located near the subunit interface in the base of the L7/L12 stalk, and near the tRNA binding site of the peptidyltransferase center. The polypeptide is Large ribosomal subunit protein uL6 (Alkaliphilus oremlandii (strain OhILAs) (Clostridium oremlandii (strain OhILAs))).